The chain runs to 313 residues: Peptidyl-prolyl cis-trans isomerase 9 (313 aa).

The region spanning 9–174 (FLDMALDEKP…AKVRIFNSGE (166 aa)) is the PPIase cyclophilin-type domain. Composition is skewed to basic and acidic residues over residues 216 to 230 (EERESDFSSKTESSR) and 253 to 269 (RGDRNRRTQRADRKDDF). Disordered stretches follow at residues 216 to 274 (EERE…IAVR) and 288 to 313 (TPEHWRRNAPSKWQQGSYTHPVDLQP).

Belongs to the cyclophilin-type PPIase family.

It catalyses the reaction [protein]-peptidylproline (omega=180) = [protein]-peptidylproline (omega=0). Functionally, PPIases accelerate the folding of proteins. It catalyzes the cis-trans isomerization of proline imid ic peptide bonds in oligopeptides. Thought to function as a catalyst in the folding and modification of cuticle collagens. The sequence is that of Peptidyl-prolyl cis-trans isomerase 9 from Caenorhabditis briggsae.